Reading from the N-terminus, the 349-residue chain is MATITLKDVHKTYHGDIAAIRGVSLAIADGEFIVLVGPSGCGKSTLLRMIAGLESITSGEISIGDRVVNGLEPSERDIAMVFQNYALYPHMTVRQNLSYGLKNRNTPKEEIERRIAKAAKSLEIEPFLDRKPRQLSGGQRQRVAMGRAIVREPAAFLFDEPLSNLDAKLRVQMRVEIKRLQRALGTTSVYVTHDQLEAMTLADRLVVLNGGRIEQVGTPIELYENPATAFVATFIGSPSMNLLDLNTGNAAWSAPAALVGKPGLATIGIRPEDITLAGDTDGGERFRARVRVGAVELVGAESYVHGTLANGEPLVFRVAGRSRMMIDEEVEVAAVAGSLHWFDAAGRRL.

The region spanning 4 to 235 (ITLKDVHKTY…PATAFVATFI (232 aa)) is the ABC transporter domain. 37 to 44 (GPSGCGKS) contributes to the ATP binding site.

The protein belongs to the ABC transporter superfamily. sn-glycerol-3-phosphate importer (TC 3.A.1.1.3) family. The complex is composed of two ATP-binding proteins (UgpC), two transmembrane proteins (UgpA and UgpE) and a solute-binding protein (UgpB).

The protein resides in the cell inner membrane. It catalyses the reaction sn-glycerol 3-phosphate(out) + ATP + H2O = sn-glycerol 3-phosphate(in) + ADP + phosphate + H(+). Functionally, part of the ABC transporter complex UgpBAEC involved in sn-glycerol-3-phosphate (G3P) import. Responsible for energy coupling to the transport system. In Rhizobium meliloti (strain 1021) (Ensifer meliloti), this protein is sn-glycerol-3-phosphate import ATP-binding protein UgpC.